Reading from the N-terminus, the 184-residue chain is Der GTPase-activating protein YihI (184 aa).

2 disordered regions span residues 1 to 106 and 159 to 184; these read MNRP…PTMS and LGDDDEEEQQEDMLQLLKRNNPKDAL. The segment covering 8-32 has biased composition (basic and acidic residues); the sequence is VADKAEKSKVKRKTREELEREARER. A compositionally biased stretch (acidic residues) spans 159–169; that stretch reads LGDDDEEEQQE.

It belongs to the YihI family. As to quaternary structure, interacts with Der.

In terms of biological role, a GTPase-activating protein (GAP) that modifies Der/EngA GTPase function. May play a role in ribosome biogenesis. The protein is Der GTPase-activating protein YihI of Pectobacterium atrosepticum (strain SCRI 1043 / ATCC BAA-672) (Erwinia carotovora subsp. atroseptica).